A 209-amino-acid chain; its full sequence is Mitochondrial import inner membrane translocase subunit Tim23 (209 aa).

3 helical membrane-spanning segments follow: residues 73–93, 125–145, and 172–194; these read FELA…FGAM, ALWA…GVII, and GGLR…YALY.

The protein belongs to the Tim17/Tim22/Tim23 family. As to quaternary structure, component of the TIM23 complex at least composed of TIMM23, TIMM17 (TIMM17A or TIMM17B) and TIMM50; within this complex, directly interacts with TIMM50. The complex interacts with the TIMM44 component of the PAM complex and with DNAJC15. Upon mitochondrial depolarization, interacts with PINK1; the interaction is required for PINK1 accumulation at the outer mitochondrial membrane, kinase activation by autophosphorylation and PRKN recruitement to mitochondria.

Its subcellular location is the mitochondrion inner membrane. Functionally, essential component of the TIM23 complex, a complex that mediates the translocation of transit peptide-containing proteins across the mitochondrial inner membrane. Has a role in the activation of stress-induced mitophagy by protecting PINK1 from OMA1-mediated degradation and facilitating its accumulation at the outer mitochondrial membrane in response to depolarization. In Pongo abelii (Sumatran orangutan), this protein is Mitochondrial import inner membrane translocase subunit Tim23 (TIMM23).